The sequence spans 220 residues: Putative O-methyltransferase Mmcs_3995 (220 aa).

Residues valine 47, glutamate 69, 71–72 (GT), serine 77, aspartate 95, and valine 96 each bind S-adenosyl-L-methionine. Residue aspartate 143 participates in substrate binding. Aspartate 145 contributes to the S-adenosyl-L-methionine binding site.

It belongs to the class I-like SAM-binding methyltransferase superfamily. Cation-dependent O-methyltransferase family.

The protein is Putative O-methyltransferase Mmcs_3995 of Mycobacterium sp. (strain MCS).